The primary structure comprises 63 residues: Large ribosomal subunit protein bL32 (63 aa).

Disordered stretches follow at residues 1-25 (MAVP…LTTP) and 42-63 (VSPK…QNND). Positions 7–20 (KTSKQKKRSRRGHI) are enriched in basic residues. Residues 54-63 (ANENKQQNND) are compositionally biased toward polar residues.

This sequence belongs to the bacterial ribosomal protein bL32 family.

This chain is Large ribosomal subunit protein bL32, found in Lactobacillus johnsonii (strain CNCM I-12250 / La1 / NCC 533).